A 154-amino-acid chain; its full sequence is Myoglobin (154 aa).

The region spanning 2 to 148 (GLSDGEWQLV…FRNDMAAKYK (147 aa)) is the Globin domain. A Phosphoserine modification is found at serine 4. Histidine 65 provides a ligand contact to nitrite. Residue histidine 65 participates in O2 binding. At threonine 68 the chain carries Phosphothreonine. Histidine 94 lines the heme b pocket.

This sequence belongs to the globin family. In terms of assembly, monomeric.

The protein localises to the cytoplasm. Its subcellular location is the sarcoplasm. It carries out the reaction Fe(III)-heme b-[protein] + nitric oxide + H2O = Fe(II)-heme b-[protein] + nitrite + 2 H(+). The catalysed reaction is H2O2 + AH2 = A + 2 H2O. Functionally, monomeric heme protein which primary function is to store oxygen and facilitate its diffusion within muscle tissues. Reversibly binds oxygen through a pentacoordinated heme iron and enables its timely and efficient release as needed during periods of heightened demand. Depending on the oxidative conditions of tissues and cells, and in addition to its ability to bind oxygen, it also has a nitrite reductase activity whereby it regulates the production of bioactive nitric oxide. Under stress conditions, like hypoxia and anoxia, it also protects cells against reactive oxygen species thanks to its pseudoperoxidase activity. This Callithrix jacchus (White-tufted-ear marmoset) protein is Myoglobin (MB).